Here is a 201-residue protein sequence, read N- to C-terminus: Small ribosomal subunit protein uS5 (201 aa).

The tract at residues 1 to 28 (MAHQNEQRGGGDRGRGRGRGRDRDQERD) is disordered. Residues 31-94 (LVDKLVHINR…DEAKKNMIRV (64 aa)) form the S5 DRBM domain. A disordered region spans residues 173–201 (SVAAKRGLKVGDLVNRRDDGASSPEAIEA).

The protein belongs to the universal ribosomal protein uS5 family. Part of the 30S ribosomal subunit. Contacts proteins S4 and S8.

In terms of biological role, with S4 and S12 plays an important role in translational accuracy. Functionally, located at the back of the 30S subunit body where it stabilizes the conformation of the head with respect to the body. In Maricaulis maris (strain MCS10) (Caulobacter maris), this protein is Small ribosomal subunit protein uS5.